An 80-amino-acid polypeptide reads, in one-letter code: U19-lycotoxin-Ls1a (80 aa).

Residues 1-22 (MSPKVQALIFIVGLITLLAAHA) form the signal peptide. Positions 23-34 (QEELSDNTESER) are excised as a propeptide. 4 disulfides stabilise this stretch: cysteine 36–cysteine 50, cysteine 43–cysteine 55, cysteine 49–cysteine 66, and cysteine 57–cysteine 64.

It belongs to the neurotoxin 02 (plectoxin) family. 05 (U19-lycotoxin) subfamily. Expressed by the venom gland.

The protein localises to the secreted. The sequence is that of U19-lycotoxin-Ls1a from Lycosa singoriensis (Wolf spider).